The primary structure comprises 207 residues: Ribonuclease HII (207 aa).

The RNase H type-2 domain occupies glycine 12–histidine 205. The a divalent metal cation site is built by aspartate 18, glutamate 19, and aspartate 114.

Belongs to the RNase HII family. Mn(2+) serves as cofactor. Requires Mg(2+) as cofactor.

It is found in the cytoplasm. It catalyses the reaction Endonucleolytic cleavage to 5'-phosphomonoester.. Endonuclease that specifically degrades the RNA of RNA-DNA hybrids. This Gluconobacter oxydans (strain 621H) (Gluconobacter suboxydans) protein is Ribonuclease HII.